The chain runs to 315 residues: Protein OPG185 (315 aa).

The N-terminal stretch at 1–16 (MTRLPILLLLISLVYA) is a signal peptide. The region spanning 17-121 (TPFPQTSKKI…NDTDKVDYEE (105 aa)) is the Ig-like V-type domain. Residues 17 to 279 (TPFPQTSKKI…SNYKTKDFVE (263 aa)) lie on the Virion surface side of the membrane. C34 and C103 are oxidised to a cystine. N37, N69, N112, and N161 each carry an N-linked (GlcNAc...) asparagine; by host glycan. The span at 193-202 (NTVSASSGES) shows a compositional bias: polar residues. The disordered stretch occupies residues 193 to 213 (NTVSASSGESTTDETPEPITD). N254 carries an N-linked (GlcNAc...) asparagine; by host glycan. Residues 280–303 (IFGITALIILSAVAIFCITYYIYN) traverse the membrane as a helical segment. The Intravirion portion of the chain corresponds to 304 to 315 (KRSRKYKTENKV).

The protein belongs to the orthopoxvirus OPG185 family. In terms of assembly, heterodimerizes with OPG040. The heterodimer OPG185-OPG040 interacts with components of the entry fusion complex OPG143 and OPG094. Heterodimer with C3/VPC protein; disulfide-linked. In terms of processing, glycosylated; contains phosphate and sulfate-substituted glycans. O-glycosylation is required for hemagglutination and hemadsorption activities of infected cell membranes.

It localises to the virion membrane. The protein localises to the host membrane. Prevents cell to cell fusion by interacting with and directing the viral OPG040 protein on the host plasma membrane. The OPG185-OPG040 complex associates with components of the entry fusion complex (EFC) presumably to avoid superinfection and syncytium formation. Via its interaction with C3/VCP protein, protects the infected cell and probably also the extracellular enveloped virus from complement attack. This Homo sapiens (Human) protein is Protein OPG185 (OPG185).